A 202-amino-acid polypeptide reads, in one-letter code: MTKTYGVDVAVYQPIDLAAYHKAGASFAIVKLTEGVDYVNRRGPSRWTAPGLTTSTLMPTISRSFGSSVSRAKKEAAYFLKEAKKQDISKKRMLWLDWEAGSGNVVTGSKSSNTAAILDFMDAIKAAGWRPGLYSGASLMRTAIDTKQVVKKYGTCLWVASYPTMAAVSTADFGYFRQWTGSPSGSLPVTAWPGRRRERCSG.

Catalysis depends on residues Asp8 and Glu99.

The protein belongs to the glycosyl hydrolase 25 family.

It catalyses the reaction Hydrolysis of (1-&gt;4)-beta-linkages between N-acetylmuramic acid and N-acetyl-D-glucosamine residues in a peptidoglycan and between N-acetyl-D-glucosamine residues in chitodextrins.. In terms of biological role, helps to release the mature phage particles from the cell wall by breaking down the peptidoglycan. This Lactobacillus delbrueckii (Lactococcus delbrueckii bacteriophage mv1) protein is Lysozyme (lysA).